Here is a 319-residue protein sequence, read N- to C-terminus: GTP 3',8-cyclase (319 aa).

A Radical SAM core domain is found at 4 to 227; that stretch reads KHGRKINYLR…VETDKSSTAL (224 aa). R13 provides a ligand contact to GTP. Positions 20 and 24 each coordinate [4Fe-4S] cluster. S-adenosyl-L-methionine is bound at residue Y26. C27 is a binding site for [4Fe-4S] cluster. Position 63 (R63) interacts with GTP. G67 is an S-adenosyl-L-methionine binding site. A GTP-binding site is contributed by T94. S118 provides a ligand contact to S-adenosyl-L-methionine. Residue K155 coordinates GTP. M189 contributes to the S-adenosyl-L-methionine binding site. [4Fe-4S] cluster contacts are provided by C249 and C252. 254-256 contributes to the GTP binding site; the sequence is RVR. C266 lines the [4Fe-4S] cluster pocket.

The protein belongs to the radical SAM superfamily. MoaA family. Monomer and homodimer. The cofactor is [4Fe-4S] cluster.

The enzyme catalyses GTP + AH2 + S-adenosyl-L-methionine = (8S)-3',8-cyclo-7,8-dihydroguanosine 5'-triphosphate + 5'-deoxyadenosine + L-methionine + A + H(+). It participates in cofactor biosynthesis; molybdopterin biosynthesis. Functionally, catalyzes the cyclization of GTP to (8S)-3',8-cyclo-7,8-dihydroguanosine 5'-triphosphate. This Clostridium botulinum (strain Langeland / NCTC 10281 / Type F) protein is GTP 3',8-cyclase.